Reading from the N-terminus, the 101-residue chain is Venom peptide Pc (101 aa).

The signal sequence occupies residues 1-20; the sequence is MSHLRIAVIFLCTLFALTAG.

Belongs to the scorpion La1-like peptide family. Contains 4 disulfide bonds. In terms of tissue distribution, expressed by the venom gland.

The protein resides in the secreted. The chain is Venom peptide Pc from Pandinus cavimanus (Tanzanian red clawed scorpion).